A 355-amino-acid chain; its full sequence is Elongation factor Ts (355 aa).

The interval 82–85 is involved in Mg(2+) ion dislocation from EF-Tu; the sequence is TDFV.

Belongs to the EF-Ts family.

The protein localises to the cytoplasm. Functionally, associates with the EF-Tu.GDP complex and induces the exchange of GDP to GTP. It remains bound to the aminoacyl-tRNA.EF-Tu.GTP complex up to the GTP hydrolysis stage on the ribosome. This chain is Elongation factor Ts, found in Helicobacter pylori (strain G27).